We begin with the raw amino-acid sequence, 207 residues long: Protein N-terminal glutamine amidohydrolase (207 aa).

Catalysis depends on residues C30, H83, and D99.

This sequence belongs to the NTAQ1 family. Monomer.

Its subcellular location is the cytoplasm. It is found in the cytosol. The protein localises to the nucleus. The enzyme catalyses N-terminal L-glutaminyl-[protein] + H2O = N-terminal L-glutamyl-[protein] + NH4(+). Functionally, mediates the side-chain deamidation of N-terminal glutamine residues to glutamate, an important step in N-end rule pathway of protein degradation. Conversion of the resulting N-terminal glutamine to glutamate renders the protein susceptible to arginylation, polyubiquitination and degradation as specified by the N-end rule. Does not act on substrates with internal or C-terminal glutamine and does not act on non-glutamine residues in any position. Does not deaminate acetylated N-terminal glutamine. With the exception of proline, all tested second-position residues on substrate peptides do not greatly influence the activity. In contrast, a proline at position 2, virtually abolishes deamidation of N-terminal glutamine. The chain is Protein N-terminal glutamine amidohydrolase (Ntaq1) from Rattus norvegicus (Rat).